The primary structure comprises 650 residues: MSSQSLYKVSGNIAANALVNNEQYKTMYQESIVNPEGFWREHGKRIDWIKPYTKIKKTSFDDHNLSINWFYDGTLNASANCLDRHLAEHSDRVAIIWEGDNASEQRKITYGELHADVCKFANALRSQGVRRGDIVTIYMPMVPEAAVAMLACARIGAVHSVVFGGFSPDSIASRVIDGKSKVVITSDEGMRGGRAIPLKRNIDDALNHPDVTSVEKVIVLKRTGGKIDWVEGRDVWWHSLLETASEHCQPEEMGAEDPLFLLYTSGSTGNPKGVLHTTGGYMVYASMTHEYVFDYKAGEVYWCTADVGWITGHSYMVYGPLANGATVLIHEGVPNHPSPARLGEMIDRHKVNILYTAPTLIRALMAEGKQHFDQFDGSTLRIMGSVGEPINPEAWRWYHEVIGHEHCPIVDTWWQTETGGILITPLPGATDTKPGSATRPFFGVQPALVDNMGNILEGENEGNLVLLDSWPGQMRTVYGDHERFVLTYFKTFRGMYFTGDGARRDEDGYYWITGRVDDVINVSGHRLGTAEVESALVSHELVAEAAVVGYPHDIKGQGIYAYVTLTRGTEESEELRQELRQWVRKEIGALATPDLIQWASGLPKTRSGKIMRRFLRKIAANEVTNLGDASTLADPAVIETLIETRLNRTE.

CoA-binding positions include 191 to 194 (RGGR), Thr311, and Asn335. ATP-binding positions include 387–389 (GEP), 411–416 (DTWWQT), Asp500, and Arg515. Ser523 contributes to the CoA binding site. Arg526 contributes to the ATP binding site. Mg(2+)-binding residues include Val537, His539, and Val542. Residue Arg584 coordinates CoA. Lys609 bears the N6-acetyllysine mark.

This sequence belongs to the ATP-dependent AMP-binding enzyme family. Requires Mg(2+) as cofactor. Post-translationally, acetylated. Deacetylation by the SIR2-homolog deacetylase activates the enzyme.

It carries out the reaction acetate + ATP + CoA = acetyl-CoA + AMP + diphosphate. Its function is as follows. Catalyzes the conversion of acetate into acetyl-CoA (AcCoA), an essential intermediate at the junction of anabolic and catabolic pathways. AcsA undergoes a two-step reaction. In the first half reaction, AcsA combines acetate with ATP to form acetyl-adenylate (AcAMP) intermediate. In the second half reaction, it can then transfer the acetyl group from AcAMP to the sulfhydryl group of CoA, forming the product AcCoA. The sequence is that of Acetyl-coenzyme A synthetase from Shewanella sp. (strain W3-18-1).